The following is a 286-amino-acid chain: Enoyl-CoA hydratase ChsH3 (286 aa).

Residues 163–271 (APERAPDLQV…RLVASVVAPT (109 aa)) form the MaoC-like domain. Residues Asp-189 and His-194 contribute to the active site.

It belongs to the enoyl-CoA hydratase/isomerase family. As to quaternary structure, homodimer.

It carries out the reaction (22E)-3-oxochola-4,22-dien-24-oyl-CoA + H2O = (22S)-hydroxy-3-oxo-chol-4-ene-24-oyl-CoA. Its pathway is steroid metabolism; cholesterol degradation. Degradation of the cholesterol side chain involves 3 multistep beta-oxidation cycles, this is involved in the second cycle. Hydrates bulky steroid enoyl-CoA esters, has highest activity with 3-OCDO-CoA (3-oxochol-4,22-dien-24-oyl-CoA) making (22S)-HOCO-CoA, followed by octenoyl-CoA, with weaker activity on 3-OCDS-CoA (3-oxocholest-4,24-dien-26-oyl-CoA) and none on 3-OPDC-CoA (3-oxo-pregna-4,17-diene-20- carboxyl-CoA). Hydrates the same substrate as EchA19, but the 2 enzymes make different stereoisomers of the product. The protein is Enoyl-CoA hydratase ChsH3 of Mycobacterium tuberculosis (strain ATCC 25618 / H37Rv).